Here is a 525-residue protein sequence, read N- to C-terminus: Light-independent protochlorophyllide reductase subunit B (525 aa).

Asp-36 is a binding site for [4Fe-4S] cluster. Asp-274 (proton donor) is an active-site residue. Substrate is bound at residue 409 to 410; that stretch reads GL. The tract at residues 433-464 is disordered; the sequence is HGGKAVAREESPVAPADLAPAATSDTPAAPSP. Residues 444 to 464 are compositionally biased toward low complexity; sequence PVAPADLAPAATSDTPAAPSP.

This sequence belongs to the ChlB/BchB/BchZ family. In terms of assembly, protochlorophyllide reductase is composed of three subunits; BchL, BchN and BchB. Forms a heterotetramer of two BchB and two BchN subunits. Requires [4Fe-4S] cluster as cofactor.

The enzyme catalyses chlorophyllide a + oxidized 2[4Fe-4S]-[ferredoxin] + 2 ADP + 2 phosphate = protochlorophyllide a + reduced 2[4Fe-4S]-[ferredoxin] + 2 ATP + 2 H2O. It participates in porphyrin-containing compound metabolism; bacteriochlorophyll biosynthesis (light-independent). Component of the dark-operative protochlorophyllide reductase (DPOR) that uses Mg-ATP and reduced ferredoxin to reduce ring D of protochlorophyllide (Pchlide) to form chlorophyllide a (Chlide). This reaction is light-independent. The NB-protein (BchN-BchB) is the catalytic component of the complex. In Rhodobacter capsulatus (strain ATCC BAA-309 / NBRC 16581 / SB1003), this protein is Light-independent protochlorophyllide reductase subunit B.